The sequence spans 60 residues: Large ribosomal subunit protein bL32 (60 aa).

This sequence belongs to the bacterial ribosomal protein bL32 family.

This is Large ribosomal subunit protein bL32 from Azotobacter vinelandii (strain DJ / ATCC BAA-1303).